The chain runs to 214 residues: LexA repressor (214 aa).

The H-T-H motif DNA-binding region spans 28-48 (IRDIQRELSISSTSVVAYNLR). Active-site for autocatalytic cleavage activity residues include Ser133 and Lys172.

It belongs to the peptidase S24 family. In terms of assembly, homodimer.

It catalyses the reaction Hydrolysis of Ala-|-Gly bond in repressor LexA.. Functionally, represses a number of genes involved in the response to DNA damage (SOS response), including recA and lexA. In the presence of single-stranded DNA, RecA interacts with LexA causing an autocatalytic cleavage which disrupts the DNA-binding part of LexA, leading to derepression of the SOS regulon and eventually DNA repair. This Herpetosiphon aurantiacus (strain ATCC 23779 / DSM 785 / 114-95) protein is LexA repressor.